A 197-amino-acid chain; its full sequence is Phosphoheptose isomerase (197 aa).

The SIS domain maps to Met37–Met197. A substrate-binding site is contributed by Asn52–Gly54. Zn(2+) is bound by residues His61 and Glu65. Substrate-binding positions include Glu65, Asn94 to Asp95, Ser120 to Ser122, Ser125, and Gln175. Zn(2+)-binding residues include Gln175 and His183.

This sequence belongs to the SIS family. GmhA subfamily. Homotetramer. Zn(2+) is required as a cofactor.

It is found in the cytoplasm. The enzyme catalyses 2 D-sedoheptulose 7-phosphate = D-glycero-alpha-D-manno-heptose 7-phosphate + D-glycero-beta-D-manno-heptose 7-phosphate. It functions in the pathway carbohydrate biosynthesis; D-glycero-D-manno-heptose 7-phosphate biosynthesis; D-glycero-alpha-D-manno-heptose 7-phosphate and D-glycero-beta-D-manno-heptose 7-phosphate from sedoheptulose 7-phosphate: step 1/1. Catalyzes the isomerization of sedoheptulose 7-phosphate in D-glycero-D-manno-heptose 7-phosphate. In Neisseria meningitidis serogroup C / serotype 2a (strain ATCC 700532 / DSM 15464 / FAM18), this protein is Phosphoheptose isomerase.